We begin with the raw amino-acid sequence, 214 residues long: ATP-dependent Clp protease proteolytic subunit (214 aa).

Serine 114 functions as the Nucleophile in the catalytic mechanism. The active site involves histidine 139.

This sequence belongs to the peptidase S14 family. Fourteen ClpP subunits assemble into 2 heptameric rings which stack back to back to give a disk-like structure with a central cavity, resembling the structure of eukaryotic proteasomes.

It localises to the cytoplasm. The enzyme catalyses Hydrolysis of proteins to small peptides in the presence of ATP and magnesium. alpha-casein is the usual test substrate. In the absence of ATP, only oligopeptides shorter than five residues are hydrolyzed (such as succinyl-Leu-Tyr-|-NHMec, and Leu-Tyr-Leu-|-Tyr-Trp, in which cleavage of the -Tyr-|-Leu- and -Tyr-|-Trp bonds also occurs).. Functionally, cleaves peptides in various proteins in a process that requires ATP hydrolysis. Has a chymotrypsin-like activity. Plays a major role in the degradation of misfolded proteins. The polypeptide is ATP-dependent Clp protease proteolytic subunit (Nitrosomonas europaea (strain ATCC 19718 / CIP 103999 / KCTC 2705 / NBRC 14298)).